A 154-amino-acid chain; its full sequence is Deoxyuridine 5'-triphosphate nucleotidohydrolase (154 aa).

Residues 68-70 (RSG), Asn81, and 85-87 (TID) contribute to the substrate site.

This sequence belongs to the dUTPase family. It depends on Mg(2+) as a cofactor.

It catalyses the reaction dUTP + H2O = dUMP + diphosphate + H(+). Its pathway is pyrimidine metabolism; dUMP biosynthesis; dUMP from dCTP (dUTP route): step 2/2. Functionally, this enzyme is involved in nucleotide metabolism: it produces dUMP, the immediate precursor of thymidine nucleotides and it decreases the intracellular concentration of dUTP so that uracil cannot be incorporated into DNA. The protein is Deoxyuridine 5'-triphosphate nucleotidohydrolase of Acidiphilium cryptum (strain JF-5).